A 33-amino-acid chain; its full sequence is U13-ctenitoxin-Pn1c (33 aa).

Disulfide bonds link cysteine 3–cysteine 17, cysteine 10–cysteine 21, and cysteine 16–cysteine 30.

As to expression, expressed by the venom gland.

Its subcellular location is the secreted. Its function is as follows. Acts as a neurotoxin. The chain is U13-ctenitoxin-Pn1c from Phoneutria nigriventer (Brazilian armed spider).